The chain runs to 443 residues: Tol-Pal system protein TolB (443 aa).

Positions 1–33 (MKIGIINTKIRTVFSAFACMIAASLVCTMPARA) are cleaved as a signal peptide.

The protein belongs to the TolB family. The Tol-Pal system is composed of five core proteins: the inner membrane proteins TolA, TolQ and TolR, the periplasmic protein TolB and the outer membrane protein Pal. They form a network linking the inner and outer membranes and the peptidoglycan layer.

The protein resides in the periplasm. Its function is as follows. Part of the Tol-Pal system, which plays a role in outer membrane invagination during cell division and is important for maintaining outer membrane integrity. The chain is Tol-Pal system protein TolB from Brucella abortus (strain S19).